Here is a 541-residue protein sequence, read N- to C-terminus: Glucose-6-phosphate isomerase (541 aa).

E346 (proton donor) is an active-site residue. Catalysis depends on residues H377 and K506.

This sequence belongs to the GPI family.

It localises to the cytoplasm. The catalysed reaction is alpha-D-glucose 6-phosphate = beta-D-fructose 6-phosphate. Its pathway is carbohydrate biosynthesis; gluconeogenesis. It functions in the pathway carbohydrate degradation; glycolysis; D-glyceraldehyde 3-phosphate and glycerone phosphate from D-glucose: step 2/4. Functionally, catalyzes the reversible isomerization of glucose-6-phosphate to fructose-6-phosphate. This Rhizobium leguminosarum bv. trifolii (strain WSM2304) protein is Glucose-6-phosphate isomerase.